The sequence spans 170 residues: Lipoprotein signal peptidase (170 aa).

The next 3 helical transmembrane spans lie at F9–V29, I72–E92, and N94–D114. Catalysis depends on residues D124 and D146. The chain crosses the membrane as a helical span at residues N143–I163.

The protein belongs to the peptidase A8 family.

The protein resides in the cell inner membrane. It carries out the reaction Release of signal peptides from bacterial membrane prolipoproteins. Hydrolyzes -Xaa-Yaa-Zaa-|-(S,diacylglyceryl)Cys-, in which Xaa is hydrophobic (preferably Leu), and Yaa (Ala or Ser) and Zaa (Gly or Ala) have small, neutral side chains.. It functions in the pathway protein modification; lipoprotein biosynthesis (signal peptide cleavage). Functionally, this protein specifically catalyzes the removal of signal peptides from prolipoproteins. The sequence is that of Lipoprotein signal peptidase from Borreliella burgdorferi (strain ATCC 35210 / DSM 4680 / CIP 102532 / B31) (Borrelia burgdorferi).